A 303-amino-acid chain; its full sequence is Signal recognition particle receptor FtsY (303 aa).

Residues 108–115 (GVNGVGKT), 190–194 (DTAGR), and 254–257 (TKLD) contribute to the GTP site.

It belongs to the GTP-binding SRP family. FtsY subfamily. As to quaternary structure, part of the signal recognition particle protein translocation system, which is composed of SRP and FtsY. SRP is a ribonucleoprotein composed of Ffh and a 4.5S RNA molecule.

It is found in the cell inner membrane. The protein resides in the cytoplasm. The enzyme catalyses GTP + H2O = GDP + phosphate + H(+). Functionally, involved in targeting and insertion of nascent membrane proteins into the cytoplasmic membrane. Acts as a receptor for the complex formed by the signal recognition particle (SRP) and the ribosome-nascent chain (RNC). Interaction with SRP-RNC leads to the transfer of the RNC complex to the Sec translocase for insertion into the membrane, the hydrolysis of GTP by both Ffh and FtsY, and the dissociation of the SRP-FtsY complex into the individual components. This chain is Signal recognition particle receptor FtsY, found in Rickettsia prowazekii (strain Madrid E).